A 214-amino-acid chain; its full sequence is Glycine-rich protein 2 (214 aa).

The region spanning 8–75 is the CSD domain; the sequence is RAKGTVKWFS…RTKAVDVTGP (68 aa). The disordered stretch occupies residues 54–91; it reads TVEFEVESGGDGRTKAVDVTGPDGAAVQGGRGGGGGGG. Residues 80 to 91 show a composition bias toward gly residues; sequence VQGGRGGGGGGG. CCHC-type zinc fingers lie at residues 157 to 174 and 194 to 211; these read SGCF…DCSQ and GGCY…ECTS.

The polypeptide is Glycine-rich protein 2 (GRP-2) (Nicotiana sylvestris (Wood tobacco)).